An 832-amino-acid polypeptide reads, in one-letter code: Putative beta-glucosidase (832 aa).

D225 is an active-site residue. The PA14 domain maps to T397 to V556.

Belongs to the glycosyl hydrolase 3 family.

The protein resides in the cytoplasm. It carries out the reaction Hydrolysis of terminal, non-reducing beta-D-glucosyl residues with release of beta-D-glucose.. The polypeptide is Putative beta-glucosidase (Schizosaccharomyces pombe (strain 972 / ATCC 24843) (Fission yeast)).